Here is a 102-residue protein sequence, read N- to C-terminus: MLKIKRDDEIIVIAGKDKGKRGSVQQVLDNGRLIVAGVNMVKKHVKANPNRGTQGGIVEQEASLNASNVAIWNPKTQKADRVGFRFEDGKKVRFFKSNGEAL.

It belongs to the universal ribosomal protein uL24 family. Part of the 50S ribosomal subunit.

Functionally, one of two assembly initiator proteins, it binds directly to the 5'-end of the 23S rRNA, where it nucleates assembly of the 50S subunit. In terms of biological role, one of the proteins that surrounds the polypeptide exit tunnel on the outside of the subunit. This chain is Large ribosomal subunit protein uL24, found in Alcanivorax borkumensis (strain ATCC 700651 / DSM 11573 / NCIMB 13689 / SK2).